The sequence spans 123 residues: Small ribosomal subunit protein uS12c (123 aa).

Belongs to the universal ribosomal protein uS12 family. In terms of assembly, part of the 30S ribosomal subunit.

It is found in the plastid. The protein resides in the chloroplast. In terms of biological role, with S4 and S5 plays an important role in translational accuracy. Located at the interface of the 30S and 50S subunits. The chain is Small ribosomal subunit protein uS12c (rps12) from Chlorella vulgaris (Green alga).